A 589-amino-acid chain; its full sequence is Cytochrome P450 monooxygenase TRI13 (589 aa).

The signal sequence occupies residues 1–21; that stretch reads MFLSLCLMVLALYLLYKWALP. Asparagine 52, asparagine 219, asparagine 243, and asparagine 366 each carry an N-linked (GlcNAc...) asparagine glycan. A heme-binding site is contributed by cysteine 531.

This sequence belongs to the cytochrome P450 family. Heme serves as cofactor.

The protein operates within sesquiterpene biosynthesis; trichothecene biosynthesis. Cytochrome P450 monooxygenase; part of the core gene cluster that mediates the biosynthesis of trichothecenes, a very large family of chemically related bicyclic sesquiterpene compounds acting as mycotoxins, including T2-toxin. The biosynthesis of trichothecenes begins with the cyclization of farnesyl diphosphate to trichodiene and is catalyzed by the trichodiene synthase TRI5. Trichodiene undergoes a series of oxygenations catalyzed by the cytochrome P450 monooxygenase TRI4. TRI4 controls the addition of four oxygens at C-2, C-3, C-11, and the C-12, C-13-epoxide to form the intermediate isotrichotriol. Isotrichotriol then undergoes a non-enzymatic isomerization and cyclization to form isotrichodermol. During this process, the oxygen at the C-2 position becomes the pyran ring oxygen and the hydroxyl group at C-11 is lost. More complex type A trichothecenes are built by modifying isotrichodermol through a series of paired hydroxylation and acetylation or acylation steps. Isotrichodermol is converted to isotrichodermin by the acetyltransferase TRI101. TRI101 encodes a C-3 transacetylase that acts as a self-protection or resistance factor during biosynthesis and that the presence of a free C-3 hydroxyl group is a key component of Fusarium trichothecene phytotoxicity. A second hydroxyl group is added to C-15 by the trichothecene C-15 hydroxylase TRI11, producing 15-decalonectrin, which is then acetylated by TRI3, producing calonectrin. A third hydroxyl group is added at C-4 by the cytochrome P450 monooxygenase TRI13, converting calonectrin to 3,15-diacetoxyspirpenol, which is subsequently acetylated by the acetyltransferase TRI7. A fourth hydroxyl group is added to C-8 by the cytochrome P450 monooxygenase TRI1, followed by the addition of an isovaleryl moiety by TRI16. Finally, the acetyl group is removed from the C-3 position by the trichothecene C-3 esterase TRI8 to produce T-2 toxin. The polypeptide is Cytochrome P450 monooxygenase TRI13 (Fusarium sporotrichioides).